Consider the following 184-residue polypeptide: Translation initiation factor IF-3 (184 aa).

This sequence belongs to the IF-3 family. In terms of assembly, monomer.

The protein resides in the cytoplasm. IF-3 binds to the 30S ribosomal subunit and shifts the equilibrium between 70S ribosomes and their 50S and 30S subunits in favor of the free subunits, thus enhancing the availability of 30S subunits on which protein synthesis initiation begins. The protein is Translation initiation factor IF-3 of Hamiltonella defensa subsp. Acyrthosiphon pisum (strain 5AT).